The primary structure comprises 385 residues: Trans-enoyl reductase poxH (385 aa).

64-67 (QPYS) lines the NADP(+) pocket. 156–163 (PDPAAPPI) provides a ligand contact to substrate. NADP(+) contacts are provided by residues 199–202 (STSV), 223–226 (SGTD), Tyr-241, and 289–290 (LG). Position 309 to 313 (309 to 313 (HMAPL)) interacts with substrate. Residue 372–373 (KR) coordinates NADP(+).

It belongs to the zinc-containing alcohol dehydrogenase family. As to quaternary structure, monomer.

It functions in the pathway secondary metabolite biosynthesis. Trans-enoyl reductase; part of the gene cluster that mediates the biosynthesis of oxaleimides, cytotoxic compounds containing an unusual disubstituted succinimide moiety. The first step of the pathway is provided by the HR-PKS poxF that serves in a new mode of collaborative biosynthesis with the PKS-NRPS poxE, by providing the olefin containing amino acid substrate via the synthesis of an ACP-bound dec-4-enoate. The cytochrome P450 monooxygenase poxM-catalyzed oxidation at the alpha-position creates the enzyme-bound 2-hydroxydec-4-enoyl-ACP thioester, which may be prone to spontaneous hydrolysis to yield 2-hydroxydec-4-enoic acid due to increased electrophilicity of the carbonyl. 2-hydroxydec-4-enoic acid can then be further oxidized by poxM to yield the alpha-ketoacid 2-oxodec-4-enoicacid, which is reductively aminated by the aminotransferase poxL to yield (S,E)-2-aminodec-4-enoic acid. The Hybrid PKS-NRPS synthetase poxE then performs condensation between the octaketide product of its PKS modules and the amino group of (S,E)-2-aminodec-4-enoic acid which is activated and incorporated by the adenylation domain. The resulting aminoacyl product can be cyclized by the Diels-Alderase PoxQ and reductively released by the reductive (R) domain of poxE to yield an aldehyde intermediate. The released aldehyde is then substrate for a Knoevenagel condensation by the hydrolyase poxO followed by an oxidation at the 5-position of the pyrrolidone ring. The presence of the olefin from the amino acid building block allows for migration of the substituted allyl group to occur. This allylic transposition reaction takes place in a conjugate addition, semipinacol-like fashion to yield a succinimide intermediate. Iterative two-electron oxidations of the C7 methyl of the succinimide intermediate to the carboxylic acid can be catalyzed by one of two remaining cytochrome P450 monooxygenasess poxC or poxD to yield oxaleimide A. Subsequent oxidation yields the maleimide scaffold oxaleimide I. Both oxaleimide A and oxaleimide I can undergo oxidative modifications in the decalin ring to yield the series of products oxaleimides B to H. The sequence is that of Trans-enoyl reductase poxH from Penicillium oxalicum (strain 114-2 / CGMCC 5302) (Penicillium decumbens).